The sequence spans 95 residues: FXYD domain-containing ion transport regulator 6 (95 aa).

The first 18 residues, 1-18 (MELVLVFLCSLLAPMVLA), serve as a signal peptide directing secretion. The Extracellular portion of the chain corresponds to 19 to 35 (STAEKEKEMDPFHYDYQ). Residues 36–58 (TLRIGGLVFAVVLFSVGILLILS) traverse the membrane as a helical segment. Over 59–95 (RRCKCSFNQKPRAPGDEEAQVENLITANATEPQKAEN) the chain is Cytoplasmic.

The protein belongs to the FXYD family. In terms of assembly, regulatory subunit of the sodium/potassium-transporting ATPase which is composed of a catalytic alpha subunit, a non-catalytic beta subunit and an additional regulatory subunit. The regulatory subunit, a member of the FXYD protein family, modulates the enzymatic activity in a tissue- and isoform-specific way by changing affinities of the Na+/K+-ATPase toward Na(+), K(+) or ATP.

Its subcellular location is the cell membrane. Its function is as follows. Associates with and regulates the activity of the sodium/potassium-transporting ATPase (NKA) which catalyzes the hydrolysis of ATP coupled with the exchange of Na(+) and K(+) ions across the plasma membrane. Reduces the apparent affinity for intracellular Na(+) with no change in the apparent affinity for extracellular K(+). In addition to modulating NKA kinetics, may also function as a regulator of NKA localization to the plasma membrane. The polypeptide is FXYD domain-containing ion transport regulator 6 (FXYD6) (Macaca fascicularis (Crab-eating macaque)).